The chain runs to 911 residues: Anoctamin-6 (911 aa).

The Cytoplasmic segment spans residues 1-301 (MQMMTRKVLL…YGEKIGIYFA (301 aa)). The helical transmembrane segment at 302-322 (WLGYYTQMLLLAAVVGVACFL) threads the bilayer. The Extracellular segment spans residues 323–376 (YGYLDQDNCTWSKEVCDPDIGGQILMCPQCDRLCPFWRLNITCESSKKLCIFDS). Residue Asn330 is glycosylated (N-linked (GlcNAc...) asparagine). 5 disulfide bridges follow: Cys331-Cys372, Cys338-Cys365, Cys349-Cys807, Cys352-Cys356, and Cys596-Cys601. An N-linked (GlcNAc...) asparagine glycan is attached at Asn362. The chain crosses the membrane as a helical span at residues 377-397 (FGTLIFAVFMGVWVTLFLEFW). Residues 398–456 (KRRQAELEYEWDTVELQQEEQARPEYEAQCNHVVINEITQEEERIPFTTCGKCIRVTLC) are Cytoplasmic-facing. The chain crosses the membrane as a helical span at residues 457–477 (ASAVFFWILLIIASVIGIIVY). Topologically, residues 478–510 (RLSVFIVFSTTLPKNPNGTDPIQKYLTPQMATS) are extracellular. Asn494 carries an N-linked (GlcNAc...) asparagine glycan. The helical transmembrane segment at 511-531 (ITASIISFIIIMILNTIYEKV) threads the bilayer. The Cytoplasmic segment spans residues 532-552 (AIMITNFELPRTQTDYENSLT). Residues 553–573 (MKMFLFQFVNYYSSCFYIAFF) traverse the membrane as a helical segment. Residues 574 to 602 (KGKFVGYPGDPVYLLGKYRSEECDPGGCL) are Extracellular-facing. A helical membrane pass occupies residues 603 to 622 (LELTTQLTIIMGGKAIWNNI). Over 623-664 (QEVLLPWVMNLIGRYKRVSGSEKITPRWEQDYHLQPMGKLGL) the chain is Cytoplasmic. Glu624, Glu667, and Glu670 together coordinate Ca(2+). The next 2 helical transmembrane spans lie at 665–685 (FYEYLEMIIQFGFVTLFVASF) and 686–706 (PLAPLLALVNNILEIRVDAWK). Over 707–723 (LTTQFRRMVPEKAQDIG) the chain is Cytoplasmic. Residues 724 to 744 (AWQPIMQGIAILAVVTNAMII) form a helical membrane-spanning segment. Residues 745 to 837 (AFTSDMIPRL…YWHVIAAKLA (93 aa)) lie on the Extracellular side of the membrane. N-linked (GlcNAc...) asparagine glycans are attached at residues Asn778, Asn785, and Asn803. A helical membrane pass occupies residues 838–858 (FIIVMEHIIYSVKFFISYAIP). Topologically, residues 859–911 (DVSKITKSKIKREKYLTQKLLHESHLKDLTKNMGIIAERIGGTVDNSVRPKLE) are cytoplasmic.

This sequence belongs to the anoctamin family. In terms of assembly, homodimer. As to expression, predominant expression seen in epithelial tissues. Also found in skeletal system where it is primarily expressed in osteoblasts.

It localises to the cell membrane. The catalysed reaction is a 1,2-diacyl-sn-glycero-3-phospho-L-serine(in) = a 1,2-diacyl-sn-glycero-3-phospho-L-serine(out). It catalyses the reaction a beta-D-galactosyl-(1&lt;-&gt;1')-N-acylsphing-4-enine(out) = a beta-D-galactosyl-(1&lt;-&gt;1')-N-acylsphing-4-enine(in). It carries out the reaction a 1,2-diacyl-sn-glycero-3-phosphocholine(in) = a 1,2-diacyl-sn-glycero-3-phosphocholine(out). Its activity is regulated as follows. Exhibits synergistic gating by Ca(2+) and voltage. Inhibited by some non-specific cation channel blockers such as: ruthenium red, 2-aminoethyl diphenylborinate (2APB), gadolinium and cadmium ions. Small-conductance calcium-activated nonselective cation (SCAN) channel which acts as a regulator of phospholipid scrambling in platelets, osteoblasts and fetal thymocytes. Phospholipid scrambling results in surface exposure of phosphatidylserine which in platelets is essential to trigger the clotting system whereas in osteoblasts is essential for the deposition of hydroxyapatite during bone mineralization. Has calcium-dependent phospholipid scramblase activity; scrambles phosphatidylserine, phosphatidylcholine and galactosylceramide. Can generate outwardly rectifying chloride channel currents in airway epithelial cells and Jurkat T lymphocytes. The chain is Anoctamin-6 (Ano6) from Mus musculus (Mouse).